The sequence spans 613 residues: Immunoglobulin superfamily member 8 (613 aa).

The first 27 residues, 1 to 27 (MGALRPTLLPPSLPLLLLLMLGMGCWA), serve as a signal peptide directing secretion. Ig-like C2-type domains are found at residues 28–149 (REVL…LRVL), 162–286 (PRGR…WAQI), 303–424 (SQLA…EAAS), and 431–560 (PVHV…WYQA). The Extracellular portion of the chain corresponds to 28 to 579 (REVLVPEGPL…VYPYMHALDT (552 aa)). Cysteine 49 and cysteine 127 are disulfide-bonded. Asparagine 50 is a glycosylation site (N-linked (GlcNAc...) asparagine). The segment at 155 to 174 (VSAAPPGPRGRQAPTSPPRM) is disordered. Cysteine 186 and cysteine 270 are oxidised to a cystine. The EWI motif motif lies at 274-276 (EWI). Cystine bridges form between cysteine 326–cysteine 406 and cysteine 462–cysteine 544. N-linked (GlcNAc...) asparagine glycans are attached at residues asparagine 327 and asparagine 463. Serine 518 is modified (phosphoserine). The helical transmembrane segment at 580–600 (LFVPLLVGTGVALVTGATVLG) threads the bilayer. The Cytoplasmic segment spans residues 601–613 (TITCCFMKRLRKR). 2 S-palmitoyl cysteine lipidation sites follow: cysteine 604 and cysteine 605.

In terms of assembly, interacts directly with CD82, CD81/tetraspanin-28 and CD9/tetraspanin-29. Also interacts with integrin alpha-3/beta-1 and integrin alpha-4/beta-1. Interacts with HSPA8; this interaction modulates migratory and antigen-presenting capacities of dendritic cells. Expressed in brain, kidney, testis, liver and placenta with moderate expression in all other tissues. Detected on a majority of B-cells, T-cells, and natural killer cells. Expressed on dendritic cells.

The protein localises to the cell membrane. In terms of biological role, member of the immunoglobulin superfamily (IgSF) that links tetraspanin-enriched microdomains to the actin cytoskeleton and plays several important roles in innate and adaptive immunity. Acts as an inducible receptor of HSPA8 on dendritic cells to enhance the CCL21/SLC-dependent migration of activated mature dendritic cells while attenuating their antigen-specific stimulatory capacities. In complex with alpha-actinins ACTN1 and ACTN4, regulates actin dynamics in the immune synapse and subsequent T-cell activation. Inhibits the entry of several viruses such as hepatitis C Virus (HCV) or HIV-1. Mechanistically, promotes a change in CD81 organization at the plasma membrane by significantly restricting its diffusion which in turn influences CD81 interaction with Claudin-1/CLDN1, preventing CLDN1 from acting as a co-receptor required for HCV entry. Accumulates at the presynaptic terminal, the producer cell side of the virological synapse, to prevent HIV-1 Env-mediated cell-cell fusion. Highly expressed on malignant cells with antigen presentation defects, interacts with NK receptor KIR3DL2 to suppress NK-cell cytotoxicity. May participate in the regulation of neurite outgrowth and maintenance of the neural network in the adult brain. The chain is Immunoglobulin superfamily member 8 (IGSF8) from Homo sapiens (Human).